We begin with the raw amino-acid sequence, 188 residues long: Elongation factor P (188 aa).

K34 is subject to N6-(3,6-diaminohexanoyl)-5-hydroxylysine.

Belongs to the elongation factor P family. May be beta-lysylated on the epsilon-amino group of Lys-34 by the combined action of EpmA and EpmB, and then hydroxylated on the C5 position of the same residue by EpmC (if this protein is present). Lysylation is critical for the stimulatory effect of EF-P on peptide-bond formation. The lysylation moiety may extend toward the peptidyltransferase center and stabilize the terminal 3-CCA end of the tRNA. Hydroxylation of the C5 position on Lys-34 may allow additional potential stabilizing hydrogen-bond interactions with the P-tRNA.

It localises to the cytoplasm. Its pathway is protein biosynthesis; polypeptide chain elongation. Its function is as follows. Involved in peptide bond synthesis. Alleviates ribosome stalling that occurs when 3 or more consecutive Pro residues or the sequence PPG is present in a protein, possibly by augmenting the peptidyl transferase activity of the ribosome. Modification of Lys-34 is required for alleviation. This Stenotrophomonas maltophilia (strain R551-3) protein is Elongation factor P.